We begin with the raw amino-acid sequence, 350 residues long: Induced myeloid leukemia cell differentiation protein Mcl-1 homolog (350 aa).

Lys5 is covalently cross-linked (Glycyl lysine isopeptide (Lys-Gly) (interchain with G-Cter in ubiquitin)). Residues 23 to 95 (AGSGGASSSG…GPNVSATPPR (73 aa)) form a disordered region. A compositionally biased stretch (low complexity) spans 31 to 41 (SGGRLLASGRE). Residues 50–61 (GGEAGAVIGGSA) are compositionally biased toward gly residues. The interval 104–175 (RASPPEEMEG…PAEEEEDELY (72 aa)) is PEST-like. At Ser121 the chain carries Phosphoserine. Residue Lys136 forms a Glycyl lysine isopeptide (Lys-Gly) (interchain with G-Cter in ubiquitin) linkage. Positions 150 to 169 (ASSGPGMDGSLPSTPPPAEE) are disordered. Phosphoserine; by GSK3-alpha and GSK3-beta is present on Ser159. Position 162 is a phosphoserine (Ser162). A Phosphothreonine modification is found at Thr163. Residues Lys194 and Lys197 each participate in a glycyl lysine isopeptide (Lys-Gly) (interchain with G-Cter in ubiquitin) cross-link. The BH3 motif lies at 209–223 (ALETLQRVGDGVQRN). The BH1 signature appears at 252–272 (HVFSDGVTNWGRIVTLISFGA). A BH2 motif is present at residues 304–319 (DWLVKQRGWDGFVEFF). A helical transmembrane segment spans residues 327–349 (GIRNVLLAFAGVAGVGAGLAYLI).

This sequence belongs to the Bcl-2 family. In terms of assembly, interacts with HIF3A (via C-terminus domain). Interacts with BOK, BIK, BAX, BAK1, and TPT1. Interacts with unphosphorylated BAD. Interacts with BMF, BBC3 and PMAIP1. Interacts with BOP. Interacts with BCL2L11; may sequester BCL2L11 to prevent its pro-apoptotic activity. Interacts with GIMAP5 and HSPA8/HSC70; the interaction between HSPA8 and MCL1 is impaired in the absence of GIMAP5. Post-translationally, cleaved by CASP3 during apoptosis, yielding a pro-apoptotic C-terminal fragment. Rapidly degraded in the absence of phosphorylation in the PEST region. In terms of processing, phosphorylated on Ser-159, by GSK3, in response to IL3/interleukin-3 withdrawal. Phosphorylation at Ser-159 induces ubiquitination and proteasomal degradation, abrogating the anti-apoptotic activity. Treatment with taxol or okadaic acid induces phosphorylation on additional sites. Post-translationally, ubiquitinated. Ubiquitination is induced by phosphorylation at Ser-159. Deubiquitinated by USP20; leading to increased stability. In terms of tissue distribution, detected in peripheral blood mononuclear cells and bone marrow.

The protein localises to the membrane. The protein resides in the cytoplasm. Its subcellular location is the mitochondrion. It is found in the nucleus. It localises to the nucleoplasm. Involved in the regulation of apoptosis versus cell survival, and in the maintenance of viability but not of proliferation. Mediates its effects by interactions with a number of other regulators of apoptosis. This chain is Induced myeloid leukemia cell differentiation protein Mcl-1 homolog (MCL1), found in Canis lupus familiaris (Dog).